Consider the following 209-residue polypeptide: ATP-dependent Clp protease proteolytic subunit (209 aa).

The active-site Nucleophile is the Ser-106. Residue His-131 is part of the active site.

It belongs to the peptidase S14 family. As to quaternary structure, fourteen ClpP subunits assemble into 2 heptameric rings which stack back to back to give a disk-like structure with a central cavity, resembling the structure of eukaryotic proteasomes.

Its subcellular location is the cytoplasm. The catalysed reaction is Hydrolysis of proteins to small peptides in the presence of ATP and magnesium. alpha-casein is the usual test substrate. In the absence of ATP, only oligopeptides shorter than five residues are hydrolyzed (such as succinyl-Leu-Tyr-|-NHMec, and Leu-Tyr-Leu-|-Tyr-Trp, in which cleavage of the -Tyr-|-Leu- and -Tyr-|-Trp bonds also occurs).. Functionally, cleaves peptides in various proteins in a process that requires ATP hydrolysis. Has a chymotrypsin-like activity. Plays a major role in the degradation of misfolded proteins. This is ATP-dependent Clp protease proteolytic subunit from Brucella suis biovar 1 (strain 1330).